A 170-amino-acid polypeptide reads, in one-letter code: Flavin reductase (170 aa).

NAD(+)-binding positions include Ser-51, His-138, and Phe-159–Gly-162.

This sequence belongs to the non-flavoprotein flavin reductase family. Homodimer. Likely forms a loose transient complex with monooxygenases for which it provides FMNH(2).

The catalysed reaction is FMNH2 + NAD(+) = FMN + NADH + 2 H(+). It catalyses the reaction FADH2 + NAD(+) = FAD + NADH + 2 H(+). Catalyzes the reduction of FMN, and to a lesser extent, FAD, using NADH as an electron donor. Is able to provide the FMNH(2) required for the Baeyer-Villiger oxidations catalyzed by 2,5-diketocamphane monooxygenases and 3,6-diketocamphane monooxygenase. NADPH acts as a very poor cosubstrate. The chain is Flavin reductase from Pseudomonas putida (Arthrobacter siderocapsulatus).